A 458-amino-acid chain; its full sequence is D-inositol 3-phosphate glycosyltransferase (458 aa).

The interval 1–29 (MRADRPGHRSRGINPGPGMFTLVGPDERD) is disordered. 1D-myo-inositol 3-phosphate is bound at residue H47. UDP-N-acetyl-alpha-D-glucosamine-binding positions include 53 to 54 (QP) and G61. 1D-myo-inositol 3-phosphate is bound by residues 58 to 63 (DAGGMN), K116, Y149, T173, and R193. Positions 267, 272, and 339 each coordinate UDP-N-acetyl-alpha-D-glucosamine. Position 351 (A351) interacts with Mg(2+). The UDP-N-acetyl-alpha-D-glucosamine site is built by E361 and E369. T375 contacts Mg(2+).

The protein belongs to the glycosyltransferase group 1 family. MshA subfamily. As to quaternary structure, homodimer.

The enzyme catalyses 1D-myo-inositol 3-phosphate + UDP-N-acetyl-alpha-D-glucosamine = 1D-myo-inositol 2-acetamido-2-deoxy-alpha-D-glucopyranoside 3-phosphate + UDP + H(+). Catalyzes the transfer of a N-acetyl-glucosamine moiety to 1D-myo-inositol 3-phosphate to produce 1D-myo-inositol 2-acetamido-2-deoxy-glucopyranoside 3-phosphate in the mycothiol biosynthesis pathway. This is D-inositol 3-phosphate glycosyltransferase from Nocardioides sp. (strain ATCC BAA-499 / JS614).